We begin with the raw amino-acid sequence, 68 residues long: UPF0352 protein CPS_2611 (68 aa).

This sequence belongs to the UPF0352 family.

The polypeptide is UPF0352 protein CPS_2611 (Colwellia psychrerythraea (strain 34H / ATCC BAA-681) (Vibrio psychroerythus)).